The sequence spans 307 residues: Fe-S cluster assembly protein dre2 (307 aa).

2 disordered regions span residues 1–26 and 159–179; these read MTPV…PSTS and KKKK…VGFV. The segment covering 15 to 26 has biased composition (low complexity); that stretch reads AAPPTKTAPSTS. The tract at residues 23 to 152 is N-terminal SAM-like domain; the sequence is PSTSTRTLLL…EKPAYQEAAV (130 aa). Residues 153-197 form a linker region; it reads PLRLGGKKKKAPAPTEQPPVATGVGFVDGNDELIDEDDLLSDDDL. Cys-207, Cys-219, Cys-222, and Cys-224 together coordinate [2Fe-2S] cluster. Residues 207 to 224 are fe-S binding site A; sequence CQPEKAKKRRRPCKDCTC. [4Fe-4S] cluster is bound by residues Cys-270, Cys-273, Cys-281, and Cys-284. Short sequence motifs (cx2C motif) lie at residues 270 to 273 and 281 to 284; these read CNSC and CSSC. Residues 270–284 form a fe-S binding site B region; that stretch reads CNSCSLGDAFRCSSC.

It belongs to the anamorsin family. Monomer. Interacts with tah18. Interacts with mia40. The cofactor is [2Fe-2S] cluster. [4Fe-4S] cluster is required as a cofactor.

The protein resides in the cytoplasm. It localises to the mitochondrion intermembrane space. Component of the cytosolic iron-sulfur (Fe-S) protein assembly (CIA) machinery required for the maturation of extramitochondrial Fe-S proteins. Part of an electron transfer chain functioning in an early step of cytosolic Fe-S biogenesis, facilitating the de novo assembly of a [4Fe-4S] cluster on the scaffold complex cfd1-nbp35. Electrons are transferred to dre2 from NADPH via the FAD- and FMN-containing protein tah18. Tah18-dre2 are also required for the assembly of the diferric tyrosyl radical cofactor of ribonucleotide reductase (RNR), probably by providing electrons for reduction during radical cofactor maturation in the catalytic small subunit rnr2. The chain is Fe-S cluster assembly protein dre2 from Aspergillus terreus (strain NIH 2624 / FGSC A1156).